Reading from the N-terminus, the 1115-residue chain is G-protein coupled receptor GRL101 (1115 aa).

Positions 1-24 (MATMSGTTIVCLIYLTTMLGNSQG) are cleaved as a signal peptide. Residues 25-767 (VNLKIESPSP…SCEDLMSNHV (743 aa)) are Extracellular-facing. LDL-receptor class A domains follow at residues 36 to 79 (TLCS…TCGC), 77 to 115 (CGCL…ECDI), 116 to 155 (YICP…ICER), 156 to 196 (RECV…ACDS), 195 to 232 (DSDK…NCKL), 231 to 269 (KLCD…VCAN), 272 to 318 (YGCP…YCSN), 320 to 363 (SECK…SCLA), 365 to 403 (PKCS…NCEN), 404 to 442 (HQCA…DCDP), 444 to 485 (PVCE…NCSQ), and 486 to 525 (HICL…NCRY). 16 cysteine pairs are disulfide-bonded: Cys38–Cys53, Cys46–Cys66, Cys60–Cys77, Cys79–Cys91, Cys86–Cys104, Cys98–Cys113, Cys118–Cys131, Cys138–Cys153, Cys158–Cys170, Cys165–Cys183, Cys177–Cys194, Cys202–Cys220, Cys214–Cys230, Cys233–Cys245, Cys240–Cys258, and Cys252–Cys267. The N-linked (GlcNAc...) asparagine glycan is linked to Asn87. A glycan (N-linked (GlcNAc...) asparagine) is linked at Asn166. An N-linked (GlcNAc...) asparagine glycan is attached at Asn269. 3 disulfide bridges follow: Cys274/Cys291, Cys282/Cys304, and Cys298/Cys316. Asn318 is a glycosylation site (N-linked (GlcNAc...) asparagine). 15 disulfides stabilise this stretch: Cys322-Cys339, Cys334-Cys352, Cys346-Cys361, Cys367-Cys379, Cys374-Cys392, Cys386-Cys401, Cys406-Cys418, Cys413-Cys431, Cys425-Cys440, Cys446-Cys458, Cys453-Cys474, Cys465-Cys483, Cys488-Cys500, Cys495-Cys513, and Cys507-Cys523. An N-linked (GlcNAc...) asparagine glycan is attached at Asn482. Asn502 is a glycosylation site (N-linked (GlcNAc...) asparagine). Positions 518 to 562 (WDENNCRYWCPHGQAICQCEGVTMDCTGQKLKEMPVQQMEEDLSK) constitute an LRRNT domain. Residue Asn571 is glycosylated (N-linked (GlcNAc...) asparagine). LRR repeat units follow at residues 584-605 (KVTY…SFQN), 608-629 (KLTH…SLLG), 632-653 (NLKQ…TFSS), 656-677 (HLTV…MFKG), 680-701 (QITV…AFNN), and 704-725 (NVRL…VFMG). Asn618 and Asn624 each carry an N-linked (GlcNAc...) asparagine glycan. N-linked (GlcNAc...) asparagine glycosylation occurs at Asn685. Residues 768–788 (LRVSIWVLGVIALVGNFVVIF) form a helical membrane-spanning segment. Topologically, residues 789 to 801 (WRVRDFRGGKVHS) are cytoplasmic. A helical transmembrane segment spans residues 802–822 (FLITNLAIGDFLMGVYLLIIA). Topologically, residues 823–857 (TADTYYRGVYISHDENWKQSGLCQFAGFVSTFSSE) are extracellular. A helical transmembrane segment spans residues 858–878 (LSVLTLSTITLDRLICILFPL). At 879-887 (RRTRLGLRQ) the chain is on the cytoplasmic side. The chain crosses the membrane as a helical span at residues 888-908 (AIIVMSCIWVLVFLLAVLPLL). The Extracellular segment spans residues 909 to 941 (GFSYFENFYGRSGVCLALHVTPDRRPGWEYSVG). The chain crosses the membrane as a helical span at residues 942–962 (VFILLNLLSFVLIASSYLWMF). Over 963–988 (SVAKKTRSAVRTAESKNDNAMARRMT) the chain is Cytoplasmic. Residues 989–1009 (LIVMTDFCCWVPIIVLGFVSL) traverse the membrane as a helical segment. The Extracellular portion of the chain corresponds to 1010–1017 (AGARADDQ). The chain crosses the membrane as a helical span at residues 1018-1038 (VYAWIAVFVLPLNSATNPVIY). Residues 1039-1115 (TLSTAPFLGN…YYNTELHSDS (77 aa)) are Cytoplasmic-facing.

Belongs to the G-protein coupled receptor 1 family. In terms of tissue distribution, predominantly expressed in a small number of neurons within the central nervous system and to a lesser extent in the heart.

Its subcellular location is the cell membrane. Functionally, might directly transduce signals carried by large extracellular lipoprotein complexes into neuronal events. In Lymnaea stagnalis (Great pond snail), this protein is G-protein coupled receptor GRL101.